The following is an 880-amino-acid chain: MEKLGLNELRERFLKFFESKGHLRLPSFSLIPQNDPSLLLINSGMAPLKPYFTGQEEPPRRRVTTCQKCIRTPDIENVGKTARHGTFFEMLGNFSFGDYFKNEAIPWAWEFFTEDLKIPVERLWVSIYEDDDEAFEIWNKKVGLPPERIVRMGKDNNFWEHGTGPCGPCSEIYFDRGEDKGCGKPDCKVGCDCDRFIEVWNLVFTQFNKEEDGSYSRLKNPNIDTGMGLERLACVMQDVNNLFEVDTIRRVLDYICKITGVEYGSSEKTDVSIRVITDHIRSTTMMISDGVIPSNEGRGYVLRRLLRRAARHGKLLGMDRPFLSDVASVVIKESKGAYPELAERAENIKKVIRIEEEKFEETIDQGLVILSKYIEETRKKGEKVISGDVVFELHGTYGFPVDLTREIAEENGLGVDEEGFREKMKEHQNLAREDYQSKQGSAWGDDIYSKLDKSVKTEFLGYTESEATARVLYIIKEDQVVDEAQKGDSVTVILDRTPFYAESGGQVGDKGLIEAEGARVKVLDCKKTNDGKYLHIGEIEEGTLRNGMEVKATIDKKRRMAIARNHTTTHLLHKALRNVLGSHVNQAGSLVEPDRLRFDFTHFSAMTPEEIKSVEDQVNEKILESIAVDIREMSIDEARKMGATALFGEKYGDVVRVVKIGDYSIELCGGTHLNVTSQAGFIKIVSESGVASGVRRIEALTGEAALKHFDEEEKLLRDIAQVLKTNPSDSVKRIESLLNEIKAAQKEIEQLRSKLVSSSLDDVLAKAVEINGVKVVTARFDQFDMEALRNTGDTIRNKLGSGVVVLGTGFGGKVSLVVMATKDVVAKGIHAGNIIKEAAKVAGGGGGGRPDMAQAGGKDVSKIDEALKQAVKVIESQLAG.

Zn(2+) contacts are provided by His-566, His-570, Cys-668, and His-672.

Belongs to the class-II aminoacyl-tRNA synthetase family. It depends on Zn(2+) as a cofactor.

The protein localises to the cytoplasm. The enzyme catalyses tRNA(Ala) + L-alanine + ATP = L-alanyl-tRNA(Ala) + AMP + diphosphate. In terms of biological role, catalyzes the attachment of alanine to tRNA(Ala) in a two-step reaction: alanine is first activated by ATP to form Ala-AMP and then transferred to the acceptor end of tRNA(Ala). Also edits incorrectly charged Ser-tRNA(Ala) and Gly-tRNA(Ala) via its editing domain. The protein is Alanine--tRNA ligase of Acetivibrio thermocellus (strain ATCC 27405 / DSM 1237 / JCM 9322 / NBRC 103400 / NCIMB 10682 / NRRL B-4536 / VPI 7372) (Clostridium thermocellum).